The following is a 102-amino-acid chain: A-type ATP synthase subunit F (102 aa).

The protein belongs to the V-ATPase F subunit family. In terms of assembly, has multiple subunits with at least A(3), B(3), C, D, E, F, H, I and proteolipid K(x).

It localises to the cell membrane. Component of the A-type ATP synthase that produces ATP from ADP in the presence of a proton gradient across the membrane. This chain is A-type ATP synthase subunit F, found in Thermococcus gammatolerans (strain DSM 15229 / JCM 11827 / EJ3).